A 321-amino-acid chain; its full sequence is Phospho-N-acetylmuramoyl-pentapeptide-transferase (321 aa).

Helical transmembrane passes span 1-21 (MSLLVWGATLISGFIIVFALM), 53-73 (TMGGLLFIIAILVTTLWVGGW), 77-97 (LQPTTWILMFILVLYGALGFW), 110-130 (GLKAWQKLLGQVIGAVILTLV), 145-165 (LGVWSLGIWYMLFAIIWLVGF), 174-194 (GLDGLVAGQATIAFGAYAVIA), 200-220 (YNVMLFCLAVVGSLLGFFVYN), 226-248 (IFMGDMGSLALGGALAAVSILLH), and 301-321 (IDIVFWSIGLVAAVISVATII).

Belongs to the glycosyltransferase 4 family. MraY subfamily. Mg(2+) is required as a cofactor.

Its subcellular location is the cell membrane. It catalyses the reaction UDP-N-acetyl-alpha-D-muramoyl-L-alanyl-gamma-D-glutamyl-L-lysyl-D-alanyl-D-alanine + di-trans,octa-cis-undecaprenyl phosphate = Mur2Ac(oyl-L-Ala-gamma-D-Glu-L-Lys-D-Ala-D-Ala)-di-trans,octa-cis-undecaprenyl diphosphate + UMP. The protein operates within cell wall biogenesis; peptidoglycan biosynthesis. In terms of biological role, catalyzes the initial step of the lipid cycle reactions in the biosynthesis of the cell wall peptidoglycan: transfers peptidoglycan precursor phospho-MurNAc-pentapeptide from UDP-MurNAc-pentapeptide onto the lipid carrier undecaprenyl phosphate, yielding undecaprenyl-pyrophosphoryl-MurNAc-pentapeptide, known as lipid I. This Lactiplantibacillus plantarum (strain ATCC BAA-793 / NCIMB 8826 / WCFS1) (Lactobacillus plantarum) protein is Phospho-N-acetylmuramoyl-pentapeptide-transferase.